Reading from the N-terminus, the 384-residue chain is Cyclohexane-1-carbonyl-CoA dehydrogenase (384 aa).

This sequence belongs to the acyl-CoA dehydrogenase family. In terms of assembly, homotetramer. It depends on FAD as a cofactor.

It carries out the reaction cyclohexane-1-carbonyl-CoA + oxidized [electron-transfer flavoprotein] + H(+) = cyclohex-1-ene-1-carbonyl-CoA + reduced [electron-transfer flavoprotein]. In terms of biological role, mediates the conversion of cyclohexane-1-carbonyl-CoA (ChCoA) into cyclohex-1-ene-1-carbonyl-CoA in biosynthesis of cyclohexane-1-carboxylate, a by-product produced during fermentation of benzoate and crotonate to acetate. The polypeptide is Cyclohexane-1-carbonyl-CoA dehydrogenase (Syntrophus aciditrophicus (strain SB)).